Here is a 2148-residue protein sequence, read N- to C-terminus: Polyketide synthase 1 (2148 aa).

Positions 19 to 261 (FIFGDQSSCN…TPLAVHAPYH (243 aa)) are N-terminal acylcarrier protein transacylase domain (SAT). The 436-residue stretch at 394–829 (DSKIAIIGMS…GGNTALLVED (436 aa)) folds into the Ketosynthase family 3 (KS3) domain. Active-site for beta-ketoacyl synthase activity residues include cysteine 566, histidine 701, and histidine 745. Residues 929–1233 (AFVFSGQGSQ…PSLMRNKDGW (305 aa)) are malonyl-CoA:ACP transacylase (MAT) domain. Serine 1018 functions as the For acyl/malonyl transferase activity in the catalytic mechanism. The product template (PT) domain stretch occupies residues 1310-1624 (TASVHRIVHE…RKVLNTAMPP (315 aa)). The tract at residues 1314–1447 (HRIVHESVDK…SSLHFEQPKV (134 aa)) is N-terminal hotdog fold. Residues 1314–1619 (HRIVHESVDK…FQGIPRKVLN (306 aa)) enclose the PKS/mFAS DH domain. Histidine 1346 serves as the catalytic Proton acceptor; for dehydratase activity. The C-terminal hotdog fold stretch occupies residues 1474–1619 (LNSRMSSGVI…FQGIPRKVLN (146 aa)). The active-site Proton donor; for dehydratase activity is aspartate 1533. Residues 1619–1655 (NTAMPPPKSQNEAQVHSSPAKSRPKPPGSASSVHSGR) form a disordered region. The span at 1627 to 1638 (SQNEAQVHSSPA) shows a compositional bias: polar residues. The Carrier 1 domain maps to 1678–1752 (RDPMQALFKI…DLATHLGFDT (75 aa)). Serine 1712 bears the O-(pantetheine 4'-phosphoryl)serine mark. Low complexity predominate over residues 1756–1769 (DQSSGQSSSCGGLS). Residues 1756–1796 (DQSSGQSSSCGGLSPRSDSTGEITSNATTPPSLSPRGSVSG) are disordered. Residues 1771 to 1796 (RSDSTGEITSNATTPPSLSPRGSVSG) are compositionally biased toward polar residues. A Carrier 2 domain is found at 1793–1870 (SVSGSQCKDV…SFKHMFQQGH (78 aa)). An O-(pantetheine 4'-phosphoryl)serine modification is found at serine 1830. Residues 1882 to 2146 (LKQYRATSTL…ERVAAFIRST (265 aa)) form a thioesterase (TE) domain region. Serine 1973 (for thioesterase activity) is an active-site residue.

Functionally, polyketide synthase; part of the Pks1 gene cluster that mediates the biosynthesis of an anthraquinone derivative pigment that contributes to conidial pigmentation that provides protection from UV radiation, heat and cold stress. The polyketide synthase Pks1 produces 1-acetyl-2,4,6,8-tetrahydroxy-9,10-anthraquinone though condensation of acetyl-CoA with malonyl-CoA. The dehydratase EthD and the laccase Mlac1 further convert the anthraquinone derivative into the final conidial pigment. This Metarhizium acridum (strain CQMa 102) protein is Polyketide synthase 1.